The primary structure comprises 482 residues: G patch domain-containing protein 2-like (482 aa).

Ser-31, Ser-86, and Ser-88 each carry phosphoserine. Thr-91 carries the phosphothreonine modification. 2 disordered regions span residues 195 to 222 and 408 to 482; these read SQPG…SECD and KRKR…TNGC. Positions 198–215 are enriched in basic and acidic residues; it reads GRKERMECEAEEQKHGSD. Residues 414–427 are compositionally biased toward low complexity; the sequence is VASASFSSPSPVHP. A compositionally biased stretch (polar residues) spans 468 to 482; it reads EKNSGCSSSPGTNGC.

This Mus musculus (Mouse) protein is G patch domain-containing protein 2-like (Gpatch2l).